Reading from the N-terminus, the 503-residue chain is Probable mitochondrial-processing peptidase subunit alpha-1, mitochondrial (503 aa).

Residues 1–59 constitute a mitochondrion transit peptide; it reads MYRTAASRARALKGVLTRSLRPARYASSSAVAETSSSTPAYLSWLSGGSRAALTSLDMP.

The protein belongs to the peptidase M16 family. Heterodimer of alpha and beta subunits, forming the mitochondrial processing protease (MPP) in which subunit alpha is involved in substrate recognition and binding and subunit beta is the catalytic subunit. Component of the ubiquinol-cytochrome c oxidoreductase (cytochrome b-c1 complex, complex III, CIII), a multisubunit enzyme composed of 10 subunits. The complex is composed of 3 respiratory subunits cytochrome b (MT-CYB), cytochrome c1 (CYC1-1 or CYC1-2) and Rieske protein (UCR1-1 or UCR1-2), 2 core protein subunits MPPalpha1 (or MPPalpha2) and MPPB, and 5 low-molecular weight protein subunits QCR7-1 (or QCR7-2), UCRQ-1 (or UCRQ-2), QCR9, UCRY and probably QCR6-1 (or QCR6-2). The complex exists as an obligatory dimer and forms supercomplexes (SCs) in the inner mitochondrial membrane with NADH-ubiquinone oxidoreductase (complex I, CI), resulting in different assemblies (supercomplexes SCI(1)III(2) and SCI(2)III(4)).

The protein localises to the mitochondrion matrix. It localises to the mitochondrion inner membrane. Its function is as follows. Substrate recognition and binding subunit of the essential mitochondrial processing protease (MPP), which cleaves the mitochondrial sequence off newly imported precursors proteins. Functionally, component of the ubiquinol-cytochrome c oxidoreductase, a multisubunit transmembrane complex that is part of the mitochondrial electron transport chain which drives oxidative phosphorylation. The respiratory chain contains 3 multisubunit complexes succinate dehydrogenase (complex II, CII), ubiquinol-cytochrome c oxidoreductase (cytochrome b-c1 complex, complex III, CIII) and cytochrome c oxidase (complex IV, CIV), that cooperate to transfer electrons derived from NADH and succinate to molecular oxygen, creating an electrochemical gradient over the inner membrane that drives transmembrane transport and the ATP synthase. The cytochrome b-c1 complex catalyzes electron transfer from ubiquinol to cytochrome c, linking this redox reaction to translocation of protons across the mitochondrial inner membrane, with protons being carried across the membrane as hydrogens on the quinol. In the process called Q cycle, 2 protons are consumed from the matrix, 4 protons are released into the intermembrane space and 2 electrons are passed to cytochrome c. This is Probable mitochondrial-processing peptidase subunit alpha-1, mitochondrial (MPPalpha1) from Arabidopsis thaliana (Mouse-ear cress).